The following is an 85-amino-acid chain: Fungal defensin triintsin (85 aa).

An N-terminal signal peptide occupies residues 1–21 (MQFTKLATVLIVSLMGSAAIA). A propeptide spanning residues 22–47 (APSVDNAPAVAAEEVAAAPAENLEKR) is cleaved from the precursor. 3 disulfides stabilise this stretch: cysteine 51-cysteine 72, cysteine 58-cysteine 80, and cysteine 62-cysteine 82.

Belongs to the invertebrate defensin family. Disulfide bonds are essential for antimicrobial activity.

Its subcellular location is the secreted. Its function is as follows. Antimicrobial peptide with broad-spectrum activity against Gram-positive bacteria, Gram-negative bacteria, and fungi. Also inhibits clinical isolates, including methicillin-resistant S.aureus (MRSA) (MIC=32 uM), K.pneumoniae, C.albicans and C.parapsilosis. Displays minimal inhibitory concentration (MIC) values similar to minimal bactericidal concentrations (MBC), suggesting a disruptive mechanism mode of action associated with membrane lysis. In vitro, shows hemolytic activity against human red blood cells. This chain is Fungal defensin triintsin, found in Trichophyton interdigitale (strain MR816).